A 207-amino-acid chain; its full sequence is Large ribosomal subunit protein uL3c (207 aa).

Residues 115–151 (IGKGFAGNQKRHNFSRGPMTHGSKNHRLPGSIGAGST) are disordered.

Belongs to the universal ribosomal protein uL3 family. As to quaternary structure, part of the 50S ribosomal subunit.

It is found in the plastid. It localises to the chloroplast. Its function is as follows. One of the primary rRNA binding proteins, it binds directly near the 3'-end of the 23S rRNA, where it nucleates assembly of the 50S subunit. The protein is Large ribosomal subunit protein uL3c (rpl3) of Emiliania huxleyi (Coccolithophore).